A 144-amino-acid chain; its full sequence is Large ribosomal subunit protein uL16 (144 aa).

This sequence belongs to the universal ribosomal protein uL16 family. Part of the 50S ribosomal subunit.

Binds 23S rRNA and is also seen to make contacts with the A and possibly P site tRNAs. This chain is Large ribosomal subunit protein uL16, found in Halalkalibacterium halodurans (strain ATCC BAA-125 / DSM 18197 / FERM 7344 / JCM 9153 / C-125) (Bacillus halodurans).